A 336-amino-acid polypeptide reads, in one-letter code: Fructose-1,6-bisphosphatase class 1 (336 aa).

Residues Glu90, Asp112, Leu114, and Asp115 each contribute to the Mg(2+) site. Residues Asp115–Ser118, Asn207, and Lys273 each bind substrate. Glu279 serves as a coordination point for Mg(2+).

Belongs to the FBPase class 1 family. In terms of assembly, homotetramer. Requires Mg(2+) as cofactor.

It is found in the cytoplasm. It carries out the reaction beta-D-fructose 1,6-bisphosphate + H2O = beta-D-fructose 6-phosphate + phosphate. It functions in the pathway carbohydrate biosynthesis; gluconeogenesis. The chain is Fructose-1,6-bisphosphatase class 1 from Xanthomonas axonopodis pv. citri (strain 306).